A 630-amino-acid polypeptide reads, in one-letter code: Probable potassium transport system protein Kup 2 (630 aa).

A run of 12 helical transmembrane segments spans residues 17 to 37, 56 to 76, 108 to 128, 145 to 165, 176 to 196, 214 to 234, 255 to 275, 293 to 313, 345 to 365, 375 to 395, 402 to 422, and 427 to 447; these read FWALTLGGVGVVFGDIGTSPL, VIVLGVLSLILWSLFIVVTAK, VFLMSLGVIGASMFIGDSMIT, PALEHYVVPLTVGILVVLFAF, AFGPVMIVWFSTLAVMGLIHI, FMLSHGMVGLVTIGAVFLAVT, WLFFVLPSLLINYFGQGALVL, FLVPLIVLATAATVIASQAVI, IYLPRVNMLLLIGVLMLVLLF, YGIAVSTTMVADGVMGFVVIW, PAAAAALIFPFVAVDAIFFSA, and LLEGAWVPLLFGLLMATLIWV.

It belongs to the HAK/KUP transporter (TC 2.A.72) family.

It is found in the cell inner membrane. The enzyme catalyses K(+)(in) + H(+)(in) = K(+)(out) + H(+)(out). Transport of potassium into the cell. Likely operates as a K(+):H(+) symporter. The protein is Probable potassium transport system protein Kup 2 of Rhodopseudomonas palustris (strain BisB18).